The primary structure comprises 704 residues: Elongation factor G (704 aa).

The 281-residue stretch at 10–290 folds into the tr-type G domain; sequence TKVRNIGIMA…AVVDYLPSPL (281 aa). GTP is bound by residues 19-26, 83-87, and 137-140; these read AHIDAGKT, DTPGH, and NKMD.

The protein belongs to the TRAFAC class translation factor GTPase superfamily. Classic translation factor GTPase family. EF-G/EF-2 subfamily.

It localises to the cytoplasm. Its function is as follows. Catalyzes the GTP-dependent ribosomal translocation step during translation elongation. During this step, the ribosome changes from the pre-translocational (PRE) to the post-translocational (POST) state as the newly formed A-site-bound peptidyl-tRNA and P-site-bound deacylated tRNA move to the P and E sites, respectively. Catalyzes the coordinated movement of the two tRNA molecules, the mRNA and conformational changes in the ribosome. This Beutenbergia cavernae (strain ATCC BAA-8 / DSM 12333 / CCUG 43141 / JCM 11478 / NBRC 16432 / NCIMB 13614 / HKI 0122) protein is Elongation factor G.